The chain runs to 204 residues: Large ribosomal subunit protein uL3c (204 aa).

Residues 126–155 form a disordered region; sequence HNFTRGPMTHGSKNHREPGSIGQGSTPAKV.

The protein belongs to the universal ribosomal protein uL3 family. As to quaternary structure, part of the 50S ribosomal subunit.

Its subcellular location is the plastid. The protein localises to the chloroplast. One of the primary rRNA binding proteins, it binds directly near the 3'-end of the 23S rRNA, where it nucleates assembly of the 50S subunit. The polypeptide is Large ribosomal subunit protein uL3c (rpl3) (Guillardia theta (Cryptophyte)).